The following is a 75-amino-acid chain: Tautomerase PptA (75 aa).

Pro2 (proton acceptor; via imino nitrogen) is an active-site residue.

Belongs to the 4-oxalocrotonate tautomerase family. PptA subfamily. In terms of assembly, homodimer.

Its subcellular location is the cytoplasm. This chain is Tautomerase PptA, found in Shigella sonnei (strain Ss046).